A 487-amino-acid polypeptide reads, in one-letter code: Glutamyl-tRNA(Gln) amidotransferase subunit A (487 aa).

Catalysis depends on charge relay system residues lysine 78 and serine 153. Serine 177 serves as the catalytic Acyl-ester intermediate.

Belongs to the amidase family. GatA subfamily. Heterotrimer of A, B and C subunits.

The catalysed reaction is L-glutamyl-tRNA(Gln) + L-glutamine + ATP + H2O = L-glutaminyl-tRNA(Gln) + L-glutamate + ADP + phosphate + H(+). Allows the formation of correctly charged Gln-tRNA(Gln) through the transamidation of misacylated Glu-tRNA(Gln) in organisms which lack glutaminyl-tRNA synthetase. The reaction takes place in the presence of glutamine and ATP through an activated gamma-phospho-Glu-tRNA(Gln). The sequence is that of Glutamyl-tRNA(Gln) amidotransferase subunit A from Oleidesulfovibrio alaskensis (strain ATCC BAA-1058 / DSM 17464 / G20) (Desulfovibrio alaskensis).